The sequence spans 333 residues: Cell shape-determining protein Mbl (333 aa).

Residues 12–14 (TAN), 156–158 (GGT), 204–207 (EDIK), and 284–287 (GGAL) each bind ATP.

It belongs to the FtsA/MreB family. In terms of assembly, forms polymers. Forms a complex with MreB and MreBH. Interacts with MreC.

It localises to the cytoplasm. Its function is as follows. Forms membrane-associated dynamic filaments that are essential for cell shape determination. Acts by regulating cell wall synthesis and cell elongation, and thus cell shape. A feedback loop between cell geometry and Mbl localization may maintain elongated cell shape by targeting cell wall growth to regions of negative cell wall curvature. Filaments rotate around the cell circumference in concert with the cell wall synthesis enzymes. The process is driven by the cell wall synthesis machinery and does not depend on Mbl polymerization. Organizes peptidoglycan synthesis in the lateral cell wall. Also required for proper chromosome segregation. The protein is Cell shape-determining protein Mbl (mbl) of Bacillus subtilis (strain 168).